The chain runs to 63 residues: Cytochrome c oxidase subunit 7C, mitochondrial (63 aa).

The transit peptide at methionine 1 to arginine 16 directs the protein to the mitochondrion. At serine 17–asparagine 33 the chain is on the mitochondrial matrix side. An N6-acetyllysine; alternate modification is found at lysine 25. Position 25 is an N6-succinyllysine; alternate (lysine 25). The chain crosses the membrane as a helical span at residues lysine 34 to leucine 60. The Mitochondrial intermembrane segment spans residues leucine 61 to glutamine 63.

The protein belongs to the cytochrome c oxidase VIIc family. Component of the cytochrome c oxidase (complex IV, CIV), a multisubunit enzyme composed of 14 subunits. The complex is composed of a catalytic core of 3 subunits MT-CO1, MT-CO2 and MT-CO3, encoded in the mitochondrial DNA, and 11 supernumerary subunits COX4I, COX5A, COX5B, COX6A, COX6B, COX6C, COX7A, COX7B, COX7C, COX8 and NDUFA4, which are encoded in the nuclear genome. The complex exists as a monomer or a dimer and forms supercomplexes (SCs) in the inner mitochondrial membrane with NADH-ubiquinone oxidoreductase (complex I, CI) and ubiquinol-cytochrome c oxidoreductase (cytochrome b-c1 complex, complex III, CIII), resulting in different assemblies (supercomplex SCI(1)III(2)IV(1) and megacomplex MCI(2)III(2)IV(2)). Interacts with RAB5IF.

It is found in the mitochondrion inner membrane. It functions in the pathway energy metabolism; oxidative phosphorylation. Component of the cytochrome c oxidase, the last enzyme in the mitochondrial electron transport chain which drives oxidative phosphorylation. The respiratory chain contains 3 multisubunit complexes succinate dehydrogenase (complex II, CII), ubiquinol-cytochrome c oxidoreductase (cytochrome b-c1 complex, complex III, CIII) and cytochrome c oxidase (complex IV, CIV), that cooperate to transfer electrons derived from NADH and succinate to molecular oxygen, creating an electrochemical gradient over the inner membrane that drives transmembrane transport and the ATP synthase. Cytochrome c oxidase is the component of the respiratory chain that catalyzes the reduction of oxygen to water. Electrons originating from reduced cytochrome c in the intermembrane space (IMS) are transferred via the dinuclear copper A center (CU(A)) of subunit 2 and heme A of subunit 1 to the active site in subunit 1, a binuclear center (BNC) formed by heme A3 and copper B (CU(B)). The BNC reduces molecular oxygen to 2 water molecules using 4 electrons from cytochrome c in the IMS and 4 protons from the mitochondrial matrix. The protein is Cytochrome c oxidase subunit 7C, mitochondrial (COX7C) of Papio hamadryas (Hamadryas baboon).